Consider the following 423-residue polypeptide: Glutamine synthetase, chloroplastic (423 aa).

Residues 1–51 (MAQAVVPAMQCRVGVKAAAGRVWSAGRTRTGRGGASPGFKVMAVSTGSTGV) constitute a chloroplast transit peptide. The GS beta-grasp domain occupies 70-150 (VIAEYIWVGG…VICDTYTPQG (81 aa)). The disordered stretch occupies residues 89–115 (RTISKPVEDPSELPKWNYDGSSTGQAP). The 270-residue stretch at 154–423 (PTNKRHRAAQ…LAAKKLALKV (270 aa)) folds into the GS catalytic domain.

Belongs to the glutamine synthetase family. In terms of assembly, homooctamer.

It localises to the plastid. The protein resides in the chloroplast. The catalysed reaction is L-glutamate + NH4(+) + ATP = L-glutamine + ADP + phosphate + H(+). In terms of biological role, the light-modulated chloroplast enzyme, encoded by a nuclear gene and expressed primarily in leaves, is responsible for the reassimilation of the ammonia generated by photorespiration. This chain is Glutamine synthetase, chloroplastic (GLN2), found in Zea mays (Maize).